We begin with the raw amino-acid sequence, 227 residues long: Peroxiredoxin-like 2A (227 aa).

The segment at 13–111 (LWSISIGAFG…DQLGVPLYAI (99 aa)) is thioredoxin fold. Active-site redox-active residues include C84 and C87.

Belongs to the peroxiredoxin-like PRXL2 family. PRXL2A subfamily.

Its subcellular location is the cytoplasm. In terms of biological role, involved in redox regulation of the cell. Acts as an antioxidant. The sequence is that of Peroxiredoxin-like 2A (prxl2a) from Xenopus laevis (African clawed frog).